Here is a 118-residue protein sequence, read N- to C-terminus: Ferredoxin-thioredoxin reductase, catalytic chain (118 aa).

A [4Fe-4S] cluster-binding site is contributed by C56. The active-site Nucleophile is the C58. An intrachain disulfide couples C58 to C88. The [4Fe-4S] cluster site is built by C75, C77, and C86.

It belongs to the ferredoxin thioredoxin reductase beta subunit family. As to quaternary structure, heterodimer of subunit A (variable subunit) and subunit B (catalytic subunit). Heterodimeric FTR forms a complex with ferredoxin and thioredoxin. [4Fe-4S] cluster serves as cofactor.

The catalysed reaction is [thioredoxin]-disulfide + 2 reduced [2Fe-2S]-[ferredoxin] + 2 H(+) = [thioredoxin]-dithiol + 2 oxidized [2Fe-2S]-[ferredoxin]. Catalytic subunit of the ferredoxin-thioredoxin reductase (FTR), which catalyzes the two-electron reduction of thioredoxins by the electrons provided by reduced ferredoxin. The protein is Ferredoxin-thioredoxin reductase, catalytic chain of Synechocystis sp. (strain ATCC 27184 / PCC 6803 / Kazusa).